A 331-amino-acid chain; its full sequence is Holliday junction branch migration complex subunit RuvB (331 aa).

The interval 1-182 (MDDRMVDQAL…FGVHLRLEYY (182 aa)) is large ATPase domain (RuvB-L). ATP-binding positions include L21, R22, G63, K66, T67, T68, 129–131 (EDF), R172, Y182, and R219. T67 contributes to the Mg(2+) binding site. The interval 183–253 (NENDLKEIII…TTKQALQLLQ (71 aa)) is small ATPAse domain (RuvB-S). The tract at residues 256 to 331 (AEGLDYIDHK…AYEHFKNFNK (76 aa)) is head domain (RuvB-H). 3 residues coordinate DNA: R292, R311, and R316.

This sequence belongs to the RuvB family. As to quaternary structure, homohexamer. Forms an RuvA(8)-RuvB(12)-Holliday junction (HJ) complex. HJ DNA is sandwiched between 2 RuvA tetramers; dsDNA enters through RuvA and exits via RuvB. An RuvB hexamer assembles on each DNA strand where it exits the tetramer. Each RuvB hexamer is contacted by two RuvA subunits (via domain III) on 2 adjacent RuvB subunits; this complex drives branch migration. In the full resolvosome a probable DNA-RuvA(4)-RuvB(12)-RuvC(2) complex forms which resolves the HJ.

It is found in the cytoplasm. It carries out the reaction ATP + H2O = ADP + phosphate + H(+). In terms of biological role, the RuvA-RuvB-RuvC complex processes Holliday junction (HJ) DNA during genetic recombination and DNA repair, while the RuvA-RuvB complex plays an important role in the rescue of blocked DNA replication forks via replication fork reversal (RFR). RuvA specifically binds to HJ cruciform DNA, conferring on it an open structure. The RuvB hexamer acts as an ATP-dependent pump, pulling dsDNA into and through the RuvAB complex. RuvB forms 2 homohexamers on either side of HJ DNA bound by 1 or 2 RuvA tetramers; 4 subunits per hexamer contact DNA at a time. Coordinated motions by a converter formed by DNA-disengaged RuvB subunits stimulates ATP hydrolysis and nucleotide exchange. Immobilization of the converter enables RuvB to convert the ATP-contained energy into a lever motion, pulling 2 nucleotides of DNA out of the RuvA tetramer per ATP hydrolyzed, thus driving DNA branch migration. The RuvB motors rotate together with the DNA substrate, which together with the progressing nucleotide cycle form the mechanistic basis for DNA recombination by continuous HJ branch migration. Branch migration allows RuvC to scan DNA until it finds its consensus sequence, where it cleaves and resolves cruciform DNA. The protein is Holliday junction branch migration complex subunit RuvB of Staphylococcus haemolyticus (strain JCSC1435).